Here is a 364-residue protein sequence, read N- to C-terminus: D-alanine--D-alanine ligase (364 aa).

One can recognise an ATP-grasp domain in the interval Arg134–Asn347. Ala167–Glu222 is an ATP binding site. 3 residues coordinate Mg(2+): Asp300, Glu314, and Asn316.

It belongs to the D-alanine--D-alanine ligase family. Mg(2+) serves as cofactor. Mn(2+) is required as a cofactor.

It localises to the cytoplasm. It carries out the reaction 2 D-alanine + ATP = D-alanyl-D-alanine + ADP + phosphate + H(+). It participates in cell wall biogenesis; peptidoglycan biosynthesis. Cell wall formation. The sequence is that of D-alanine--D-alanine ligase from Legionella pneumophila (strain Lens).